The sequence spans 156 residues: Large ribosomal subunit protein bL17 (156 aa).

A disordered region spans residues 127–156; it reads RATRAAASKKAAEEKAAEAAEEKDEAAEEK. The segment covering 136 to 146 has biased composition (basic and acidic residues); sequence KAAEEKAAEAA. Residues 147 to 156 are compositionally biased toward acidic residues; it reads EEKDEAAEEK.

This sequence belongs to the bacterial ribosomal protein bL17 family. In terms of assembly, part of the 50S ribosomal subunit. Contacts protein L32.

The chain is Large ribosomal subunit protein bL17 from Corynebacterium urealyticum (strain ATCC 43042 / DSM 7109).